Here is a 232-residue protein sequence, read N- to C-terminus: Small ribosomal subunit protein uS3 (232 aa).

The 69-residue stretch at 39–107 folds into the KH type-2 domain; the sequence is IRAFLKKKLY…EVNVNIKEER (69 aa). The segment at 211-232 is disordered; sequence GVQPEKTEEEAPKKTRRARRGK. Residues 213–223 show a composition bias toward basic and acidic residues; that stretch reads QPEKTEEEAPK.

The protein belongs to the universal ribosomal protein uS3 family. Part of the 30S ribosomal subunit. Forms a tight complex with proteins S10 and S14.

In terms of biological role, binds the lower part of the 30S subunit head. Binds mRNA in the 70S ribosome, positioning it for translation. The chain is Small ribosomal subunit protein uS3 from Campylobacter concisus (strain 13826).